A 122-amino-acid chain; its full sequence is Acidic phospholipase A2 (122 aa).

Intrachain disulfides connect Cys-26/Cys-115, Cys-28/Cys-44, Cys-43/Cys-95, Cys-49/Cys-122, Cys-50/Cys-88, Cys-57/Cys-81, and Cys-75/Cys-86. Positions 27, 29, and 31 each coordinate Ca(2+). His-47 is a catalytic residue. Residue Asp-48 coordinates Ca(2+). Residue Asp-89 is part of the active site.

Ca(2+) is required as a cofactor. In terms of tissue distribution, expressed by the venom gland.

Its subcellular location is the secreted. The enzyme catalyses a 1,2-diacyl-sn-glycero-3-phosphocholine + H2O = a 1-acyl-sn-glycero-3-phosphocholine + a fatty acid + H(+). In terms of biological role, PLA2 catalyzes the calcium-dependent hydrolysis of the 2-acyl groups in 3-sn-phosphoglycerides. The protein is Acidic phospholipase A2 of Lachesis stenophrys (Central American bushmaster).